The sequence spans 380 residues: Homoserine O-acetyltransferase (380 aa).

The AB hydrolase-1 domain occupies 59 to 363 (NVVMVLHALT…IYGHDGFLVE (305 aa)). Catalysis depends on Ser-164, which acts as the Nucleophile. Substrate is bound at residue Arg-234. Catalysis depends on residues Asp-327 and His-357. Asp-358 is a substrate binding site.

Belongs to the AB hydrolase superfamily. MetX family. As to quaternary structure, homodimer.

It is found in the cytoplasm. The catalysed reaction is L-homoserine + acetyl-CoA = O-acetyl-L-homoserine + CoA. Its pathway is amino-acid biosynthesis; L-methionine biosynthesis via de novo pathway; O-acetyl-L-homoserine from L-homoserine: step 1/1. Functionally, transfers an acetyl group from acetyl-CoA to L-homoserine, forming acetyl-L-homoserine. The sequence is that of Homoserine O-acetyltransferase from Mycolicibacterium smegmatis (strain ATCC 700084 / mc(2)155) (Mycobacterium smegmatis).